Reading from the N-terminus, the 312-residue chain is Carbamate kinase 2 (312 aa).

The protein belongs to the carbamate kinase family.

The protein resides in the cytoplasm. It carries out the reaction hydrogencarbonate + NH4(+) + ATP = carbamoyl phosphate + ADP + H2O + H(+). Its pathway is metabolic intermediate metabolism; carbamoyl phosphate degradation; CO(2) and NH(3) from carbamoyl phosphate: step 1/1. The sequence is that of Carbamate kinase 2 (arcC2) from Enterococcus faecalis (strain ATCC 700802 / V583).